The sequence spans 148 residues: Small ribosomal subunit protein bS6 (148 aa).

The interval 96–148 is disordered; that stretch reads HEEGQSAMLTRRDDRRERDGDDRPRRREGGFDRGDRGDRGPRRPRDNEAGEGA.

It belongs to the bacterial ribosomal protein bS6 family.

Binds together with bS18 to 16S ribosomal RNA. The polypeptide is Small ribosomal subunit protein bS6 (Brucella melitensis biotype 1 (strain ATCC 23456 / CCUG 17765 / NCTC 10094 / 16M)).